The following is a 492-amino-acid chain: Serine/threonine protein phosphatase 2A 57 kDa regulatory subunit B' theta isoform (492 aa).

Residues 1-63 (MWKQILSKLP…GFKEGNLKGN (63 aa)) are disordered. The span at 16–39 (KNHSSSSSSTSKSSDNGASKSGNS) shows a compositional bias: low complexity. The Microbody targeting signal motif lies at 490-492 (SSL).

The protein belongs to the phosphatase 2A regulatory subunit B56 family. PP2A consists of a common heteromeric enzyme, composed of a catalytic subunit (subunits C), a constant regulatory subunit (subunit A), and a variety of regulatory subunits such as subunits B (the R2/B/PR55/B55, R3/B''/PR72/PR130/PR59 and R5/B'/B56 families). Interacts with BZR1. Interacts with PP2A2, PP2A5 and PP2AA2. Highly expressed in dry seeds. Expressed in roots, cotyledons, rosette leaves and flowers.

Its subcellular location is the cytoplasm. The protein localises to the cytosol. It is found in the peroxisome. Functionally, the B regulatory subunit may modulate substrate selectivity and catalytic activity, and may also direct the localization of the catalytic enzyme to a particular subcellular compartment. Associates with the serine/threonine-protein phosphatase PP2A catalytic subunit C and regulatory subunit A to positively regulates beta-oxidation of fatty acids and protoauxins in peroxisomes by dephosphorylating peroxisomal beta-oxidation-related proteins. Required for the formation of the PP2A holoenzyme that negatively regulates brassinosteroid signaling by dephosphorylating and inactivating BRI1 in the cytoplasm. This is Serine/threonine protein phosphatase 2A 57 kDa regulatory subunit B' theta isoform (B'THETA) from Arabidopsis thaliana (Mouse-ear cress).